Here is a 108-residue protein sequence, read N- to C-terminus: Iron-sulfur cluster assembly protein CyaY (108 aa).

Belongs to the frataxin family.

Its function is as follows. Involved in iron-sulfur (Fe-S) cluster assembly. May act as a regulator of Fe-S biogenesis. This Burkholderia mallei (strain NCTC 10247) protein is Iron-sulfur cluster assembly protein CyaY.